The following is a 131-amino-acid chain: MKKHGVLNSEIAAVLASLGHTDTIVIADCGLPIPDGVKRIDLAVEIGKPSFLDVLQVVADDMAIEKVTLAEEVINNNAEVNKEIELKLIEPAFEYVCHEQFKEHTKKAKAIIRTGEATPYANVILHAGVIF.

Catalysis depends on His-20, which acts as the Proton donor. Substrate-binding positions include Asp-28, His-98, and 120 to 122 (YAN).

Belongs to the RbsD / FucU family. RbsD subfamily. As to quaternary structure, homodecamer.

It is found in the cytoplasm. The catalysed reaction is beta-D-ribopyranose = beta-D-ribofuranose. It functions in the pathway carbohydrate metabolism; D-ribose degradation; D-ribose 5-phosphate from beta-D-ribopyranose: step 1/2. Functionally, catalyzes the interconversion of beta-pyran and beta-furan forms of D-ribose. This chain is D-ribose pyranase, found in Bacillus anthracis (strain A0248).